We begin with the raw amino-acid sequence, 119 residues long: Large ribosomal subunit protein uL14 (119 aa).

This sequence belongs to the universal ribosomal protein uL14 family. As to quaternary structure, part of the 50S ribosomal subunit. Forms a cluster with proteins L3 and L19. In the 70S ribosome, L14 and L19 interact and together make contacts with the 16S rRNA in bridges B5 and B8.

Binds to 23S rRNA. Forms part of two intersubunit bridges in the 70S ribosome. The polypeptide is Large ribosomal subunit protein uL14 (Anaplasma phagocytophilum (strain HZ)).